The primary structure comprises 110 residues: uncharacterized protein (110 aa).

The segment at 38–62 (SVQQNARAEEAEAAAPPAEEDSLPD) is disordered.

This is an uncharacterized protein from Mus musculus (Mouse).